A 622-amino-acid polypeptide reads, in one-letter code: MADVPADLAAVWPRVLEQLLGEGQQGIEPKDKQWIERCQPLALVADTALLAVPNEWGKRVLEGRLAPLISETLTRECGRPIRIAITVDDSAGEPPAPPAPPMHQSHQGPQGHRYPSQQRDDAPRGDTYDGYGHRPSDDGMPTARPAYPDYQQQRPEPGAWPRTQEDLSWQQPRHGGYQDREQPPGEPYRESEAYQRESEQYREQPPEPWREPYGAGRPQQHDYRSQPPEHQGYEQQRPDRQDQQQPGPRPGGHGPGRTGGSVPGPMGAQPSPAPGPGEPHARLNPKYLFDTFVIGASNRFAHAAAVAVAEAPAKAYNPLFIYGESGLGKTHLLHAIGHYARSLYPGTRVRYVSSEEFTNEFINSIRDGKGDTFRKRYRDVDILLVDDIQFLASKESTQEEFFHTFNTLHNANKQIVLSSDRPPKQLVTLEDRLRNRFEWGLTTDVQPPELETRIAILRKKAVQEQLNAPPEVLEFIASRISRNIRELEGALIRVTAFASLNRQPVDLGLTEIVLKDLIPGGEESAPEITAPAIMAATADYFGLTVDDLCGSSRSRVLVTARQIAMYLCRELTDLSLPKIGAQFGGRDHTTVMHADRKIRALMAERRSIYNQVTELTNRIKNG.

Residues 1-99 (MADVPADLAA…SAGEPPAPPA (99 aa)) are domain I, interacts with DnaA modulators. Positions 88-282 (DDSAGEPPAP…APGPGEPHAR (195 aa)) are disordered. Residues 100–281 (PPMHQSHQGP…PAPGPGEPHA (182 aa)) form a domain II region. 2 stretches are compositionally biased toward basic and acidic residues: residues 118-137 (QRDD…RPSD) and 176-210 (GYQD…EPWR). The segment covering 250-262 (PGGHGPGRTGGSV) has biased composition (gly residues). Positions 282-498 (RLNPKYLFDT…GALIRVTAFA (217 aa)) are domain III, AAA+ region. Positions 326, 328, 329, and 330 each coordinate ATP. A domain IV, binds dsDNA region spans residues 499-622 (SLNRQPVDLG…TELTNRIKNG (124 aa)).

This sequence belongs to the DnaA family. Oligomerizes as a right-handed, spiral filament on DNA at oriC.

The protein localises to the cytoplasm. Its function is as follows. Plays an essential role in the initiation and regulation of chromosomal replication. ATP-DnaA binds to the origin of replication (oriC) to initiate formation of the DNA replication initiation complex once per cell cycle. Binds the DnaA box (a 9 base pair repeat at the origin) and separates the double-stranded (ds)DNA. Forms a right-handed helical filament on oriC DNA; dsDNA binds to the exterior of the filament while single-stranded (ss)DNA is stabiized in the filament's interior. The ATP-DnaA-oriC complex binds and stabilizes one strand of the AT-rich DNA unwinding element (DUE), permitting loading of DNA polymerase. After initiation quickly degrades to an ADP-DnaA complex that is not apt for DNA replication. Binds acidic phospholipids. This chain is Chromosomal replication initiator protein DnaA, found in Streptomyces griseus subsp. griseus (strain JCM 4626 / CBS 651.72 / NBRC 13350 / KCC S-0626 / ISP 5235).